Here is a 788-residue protein sequence, read N- to C-terminus: Cell division cycle protein 27 homolog (788 aa).

Residues tyrosine 198–asparagine 436 are disordered. Residues glycine 217–proline 229 are compositionally biased toward low complexity. Polar residues-rich tracts occupy residues arginine 241–asparagine 273, serine 293–phenylalanine 303, and asparagine 319–arginine 360. Positions alanine 366–threonine 378 are enriched in low complexity. Residues valine 391–glutamate 414 are compositionally biased toward polar residues. TPR repeat units follow at residues proline 561–phenylalanine 594, tyrosine 596–aspartate 628, tyrosine 629–asparagine 662, alanine 664–aspartate 696, and alanine 731–glycine 764.

Belongs to the APC3/CDC27 family. The APC/C complex is probably composed of at least 12 subunits: apc-2, apc-10, apc-11, cdc-26, emb-1, emb-27, emb-30, mat-1, mat-2, mat-3, such-1 and gfi-3. Expressed in the ventral nerve cord.

Its subcellular location is the nucleus. It participates in protein modification; protein ubiquitination. Probable component of the anaphase promoting complex/cyclosome (APC/C), a cell cycle-regulated E3 ubiquitin ligase that controls progression through mitosis and the G1 phase of the cell cycle. The APC/C complex acts by mediating ubiquitination and subsequent degradation of target proteins. Developmental role in early embryogenesis and the metaphase to anaphase transition in oocyte and spermatocyte meiosis and mitosis in germ cells. Required for embryonic anterior-posterior axis formation. Plays a role in regulating the abundance of glr-1 receptors in postmitotic neurons, which may in turn control animal locomotion. The polypeptide is Cell division cycle protein 27 homolog (Caenorhabditis elegans).